The primary structure comprises 405 residues: MTISYDEEFSSLMLRWRGSIWKAVLKDLIGFYIAYYIVLAFQWYLLDEKGKEYFTGWIMWCEIGAQYIPLSFLLGFFVSLIVARWWEQFNCISWPDKMMIMVSACLPGNENMVVRQTIARWSSLQAAIAWSGVSVKTLKRFPTERHMVASKLMTEEEYDLYMNTDAPHGKWFIPILWIVNLIKKQKQKGIIDSIQMDMLLKQVYSYRDGFAMLFVYDWIKIPLVYTQVVAIATYGYFFICLIGRQPKLDQRSMEKEITILFPIFTTFQMLFYLGWLKVGQYLMNPFGEDDDDFELNYVLDRNTAIAHMMASELSDQLPSIGAPMVPAVPHTRASFKIQDVIPKSHLAGFKLSEAEMKLIKPEDLEEHERLMEETKVTNRQRLGTLVRALEKKSRTNATINEDDEE.

The next 4 membrane-spanning stretches (helical) occupy residues 28-48, 63-83, 223-243, and 256-276; these read LIGF…LLDE, IGAQ…LIVA, LVYT…CLIG, and EITI…LGWL.

It belongs to the anion channel-forming bestrophin (TC 1.A.46) family. Calcium-sensitive chloride channel subfamily.

The protein resides in the membrane. In Caenorhabditis elegans, this protein is Bestrophin homolog 14 (best-14).